A 138-amino-acid polypeptide reads, in one-letter code: Single-stranded DNA-binding protein 3 (138 aa).

One can recognise an SSB domain in the interval 1–104; sequence MINNIVLVGR…VVAENFQLLE (104 aa). A compositionally biased stretch (low complexity) spans 105 to 121; the sequence is SRNSQQQTNQSGNSSNS. Residues 105 to 138 are disordered; that stretch reads SRNSQQQTNQSGNSSNSYFGNANKMDISDDDLPF. Residues 133 to 138 carry the Important for interaction with partner proteins motif; that stretch reads DDDLPF.

Homotetramer.

Plays an important role in DNA replication, recombination and repair. Binds to ssDNA and to an array of partner proteins to recruit them to their sites of action during DNA metabolism. This chain is Single-stranded DNA-binding protein 3 (ssb3), found in Streptococcus agalactiae serotype V (strain ATCC BAA-611 / 2603 V/R).